An 844-amino-acid chain; its full sequence is DNA mismatch repair protein MutS (844 aa).

610-617 lines the ATP pocket; it reads GPNMGGKS.

This sequence belongs to the DNA mismatch repair MutS family.

Functionally, this protein is involved in the repair of mismatches in DNA. It is possible that it carries out the mismatch recognition step. This protein has a weak ATPase activity. This chain is DNA mismatch repair protein MutS, found in Francisella tularensis subsp. tularensis (strain WY96-3418).